Reading from the N-terminus, the 220-residue chain is Guanylate kinase (220 aa).

A Guanylate kinase-like domain is found at 15–194 (GLMLVISSPS…AFEGIEAIVK (180 aa)). ATP is bound at residue 22–29 (SPSGAGKS).

This sequence belongs to the guanylate kinase family.

Its subcellular location is the cytoplasm. It catalyses the reaction GMP + ATP = GDP + ADP. In terms of biological role, essential for recycling GMP and indirectly, cGMP. The chain is Guanylate kinase from Agrobacterium fabrum (strain C58 / ATCC 33970) (Agrobacterium tumefaciens (strain C58)).